The following is a 342-amino-acid chain: Delta(6)-protoilludene synthase (342 aa).

Mg(2+)-binding residues include D81, N217, S221, and E225. Residues 81-85 (DEYSD) carry the DDXXD motif motif. (2E,6E)-farnesyl diphosphate-binding residues include R306 and Y307.

This sequence belongs to the terpene synthase family. Mg(2+) is required as a cofactor.

The enzyme catalyses (2E,6E)-farnesyl diphosphate = Delta(6)-protoilludene + diphosphate. In terms of biological role, delta(6)-protoilludene synthase, part of the gene cluster that mediates the biosynthesis of melleolides, a range of antifungal and phytotoxic polyketide derivatives composed of an orsellinic acid (OA) moiety esterified to various sesquiterpene alcohols. The first step in melleolides biosynthesis is performed by the delta(6)-protoilludene synthase PRO1 which catalyzes the cyclization of farnesyl diphosphate to protoilludene. The orsellinic acid synthase armB produces OA by condensing acetyl-CoA with 3 malonyl-CoA units in a three-round chain elongation reaction folowed by a C2-C7 ring closure. ArmB further catalyzes the trans-esterification of OA to the various sesquiterpene alcohols resulting from the hydroxylation of protoilludene. The melleolides cluster also includes 5 cytochrome P450 monooxygenases, 4 NAD(+)-dependent oxidoreductases, one flavin-dependent oxidoreductase, and one O-methyltransferase. The cytochrome P450 monooxygenases may be involved in protoilludene hydroxylation to elaborate melleolides with multiple alcohol groups, such as melleolide D, which carries alcohol functionalities at C-4, C-5, C-10, and C-13. The role of the NAD(+)-dependent enzymes remains unknown. Numerous melleolides, including arnamial, show 5'-O-methylation of the aromatic moiety which may be catalyzed by the methyltransferase encoded in the cluster. The flavin-dependent oxidoreductase might represent the dehydrogenase yielding the aldehyde in position 1 of arnamial and other melleolides. Finally, several halogenases, localized outside of the cluster, are able to catalyze the transfer of a single chlorine atom to the melleolide backbone, resulting in a 6'-chloromelleolide product. The polypeptide is Delta(6)-protoilludene synthase (Armillaria ostoyae (Armillaria root rot fungus)).